We begin with the raw amino-acid sequence, 103 residues long: Small ribosomal subunit protein uS10 (103 aa).

Belongs to the universal ribosomal protein uS10 family. As to quaternary structure, part of the 30S ribosomal subunit.

Its function is as follows. Involved in the binding of tRNA to the ribosomes. The chain is Small ribosomal subunit protein uS10 from Burkholderia mallei (strain NCTC 10247).